The primary structure comprises 351 residues: 1-aminocyclopropane-1-carboxylate oxidase homolog 4 (351 aa).

The Fe2OG dioxygenase domain maps to 200 to 304 (KSQYMVGQHY…AIVFSTFMRA (105 aa)). H224, D226, and H280 together coordinate Fe cation. R291 lines the 2-oxoglutarate pocket.

It belongs to the iron/ascorbate-dependent oxidoreductase family. Fe(2+) serves as cofactor.

This chain is 1-aminocyclopropane-1-carboxylate oxidase homolog 4, found in Arabidopsis thaliana (Mouse-ear cress).